Reading from the N-terminus, the 494-residue chain is 4-trimethylaminobutyraldehyde dehydrogenase (494 aa).

Residue Ser2 is modified to N-acetylserine. Lys30 is subject to N6-acetyllysine; alternate. Position 30 is an N6-succinyllysine; alternate (Lys30). Lys59 is modified (N6-succinyllysine). NAD(+) contacts are provided by residues Lys180 and 232-236 (GSVPT). Catalysis depends on Glu254, which acts as the Proton acceptor. Cys288 functions as the Nucleophile in the catalytic mechanism. The residue at position 298 (Lys298) is an N6-acetyllysine. Residue Lys303 is modified to N6-acetyllysine; alternate. An N6-succinyllysine; alternate modification is found at Lys303. At Lys344 the chain carries N6-acetyllysine. An NAD(+)-binding site is contributed by Glu391.

This sequence belongs to the aldehyde dehydrogenase family. Homotetramer.

The protein localises to the cytoplasm. The protein resides in the cytosol. It catalyses the reaction 4-(trimethylamino)butanal + NAD(+) + H2O = 4-(trimethylamino)butanoate + NADH + 2 H(+). It carries out the reaction an aldehyde + NAD(+) + H2O = a carboxylate + NADH + 2 H(+). The enzyme catalyses 4-aminobutanal + NAD(+) + H2O = 4-aminobutanoate + NADH + 2 H(+). The catalysed reaction is formaldehyde + NAD(+) + H2O = formate + NADH + 2 H(+). It catalyses the reaction acetaldehyde + NAD(+) + H2O = acetate + NADH + 2 H(+). It carries out the reaction imidazole-4-acetaldehyde + NAD(+) + H2O = imidazole-4-acetate + NADH + 2 H(+). The enzyme catalyses acrolein + NAD(+) + H2O = acrylate + NADH + 2 H(+). The catalysed reaction is (5-hydroxyindol-3-yl)acetaldehyde + NAD(+) + H2O = (5-hydroxyindol-3-yl)acetate + NADH + 2 H(+). It catalyses the reaction 3,4-dihydroxyphenylacetaldehyde + NAD(+) + H2O = 3,4-dihydroxyphenylacetate + NADH + 2 H(+). It carries out the reaction spermine monoaldehyde + NAD(+) + H2O = N-(2-carboxyethyl)spermidine + NADH + 2 H(+). The enzyme catalyses propanal + NAD(+) + H2O = propanoate + NADH + 2 H(+). The catalysed reaction is butanal + NAD(+) + H2O = butanoate + NADH + 2 H(+). It catalyses the reaction pentanal + NAD(+) + H2O = pentanoate + NADH + 2 H(+). It carries out the reaction hexanal + NAD(+) + H2O = hexanoate + NADH + 2 H(+). Its pathway is amine and polyamine biosynthesis; carnitine biosynthesis. Converts gamma-trimethylaminobutyraldehyde into gamma-butyrobetaine with high efficiency (in vitro). Can catalyze the irreversible oxidation of a broad range of aldehydes to the corresponding acids in an NAD-dependent reaction, but with low efficiency. Catalyzes the oxidation of aldehydes arising from biogenic amines and polyamines. In Pongo abelii (Sumatran orangutan), this protein is 4-trimethylaminobutyraldehyde dehydrogenase (ALDH9A1).